Reading from the N-terminus, the 467-residue chain is E3 ubiquitin-protein ligase IE61 (467 aa).

The segment at 19 to 58 adopts an RING-type zinc-finger fold; that stretch reads CTICMSTVSDLGKTMPCLHDFCFVCIRAWTSTSVQCPLCR. 4 disordered regions span residues 101–171, 205–238, 344–364, and 413–467; these read GDVI…GVTK, QQPR…FRAT, IVRP…RDTR, and DSAC…MKKS. Residues 116–143 show a composition bias toward polar residues; the sequence is ESIQQPTSRSSREPIQSPNPGPLQSSAR. Over residues 149–161 the composition is skewed to low complexity; the sequence is SPSDSQQDSIQPP. Polar residues predominate over residues 162-171; it reads TRDSSPGVTK. Basic and acidic residues predominate over residues 228–238; the sequence is RTMDRLPFRAT. Low complexity-rich tracts occupy residues 429 to 443 and 450 to 459; these read GESN…TSGS and KSSAGKAGKG.

Interacts with host BTRC; this interaction seems to inactivate SCF-mediated protein degradation in general. In terms of processing, auto-ubiquitinated.

It carries out the reaction S-ubiquitinyl-[E2 ubiquitin-conjugating enzyme]-L-cysteine + [acceptor protein]-L-lysine = [E2 ubiquitin-conjugating enzyme]-L-cysteine + N(6)-ubiquitinyl-[acceptor protein]-L-lysine.. Its function is as follows. RING-finger E3 ubiquitin ligase that degrades host SP100, one of the major components of ND10 nuclear bodies, thereby disrupting the organization of these bodies. Also plays a role in the inhibition of host NF-kappa-B pathway by blocking the SCF(BTRC)-mediated addition of ubiquitin chains to host I-kappa-B-alpha/NFKBIA, thereby interfering with its degradation. The polypeptide is E3 ubiquitin-protein ligase IE61 (61) (Varicella-zoster virus (strain Dumas) (HHV-3)).